A 390-amino-acid polypeptide reads, in one-letter code: Peroxisomal sarcosine oxidase (390 aa).

Residue D9–F39 coordinates FAD. Residues K126 and K287 each carry the N6-acetyllysine modification. C319 carries the post-translational modification S-8alpha-FAD cysteine. The Microbody targeting signal motif lies at A388–L390.

The protein belongs to the MSOX/MTOX family. FAD serves as cofactor. As to expression, kidney and liver.

The protein resides in the peroxisome. The catalysed reaction is sarcosine + O2 + H2O = formaldehyde + glycine + H2O2. It carries out the reaction L-pipecolate + O2 = L-1-piperideine-6-carboxylate + H2O2 + H(+). Metabolizes sarcosine, L-pipecolic acid and L-proline. The protein is Peroxisomal sarcosine oxidase (Pipox) of Mus musculus (Mouse).